Here is a 258-residue protein sequence, read N- to C-terminus: Imidazole glycerol phosphate synthase subunit HisF (258 aa).

Active-site residues include Asp-11 and Asp-130.

The protein belongs to the HisA/HisF family. As to quaternary structure, heterodimer of HisH and HisF.

It is found in the cytoplasm. The catalysed reaction is 5-[(5-phospho-1-deoxy-D-ribulos-1-ylimino)methylamino]-1-(5-phospho-beta-D-ribosyl)imidazole-4-carboxamide + L-glutamine = D-erythro-1-(imidazol-4-yl)glycerol 3-phosphate + 5-amino-1-(5-phospho-beta-D-ribosyl)imidazole-4-carboxamide + L-glutamate + H(+). Its pathway is amino-acid biosynthesis; L-histidine biosynthesis; L-histidine from 5-phospho-alpha-D-ribose 1-diphosphate: step 5/9. Its function is as follows. IGPS catalyzes the conversion of PRFAR and glutamine to IGP, AICAR and glutamate. The HisF subunit catalyzes the cyclization activity that produces IGP and AICAR from PRFAR using the ammonia provided by the HisH subunit. The polypeptide is Imidazole glycerol phosphate synthase subunit HisF (Xanthomonas campestris pv. campestris (strain 8004)).